Here is a 368-residue protein sequence, read N- to C-terminus: Probable endopolygalacturonase I (368 aa).

The N-terminal stretch at Met1–Ala18 is a signal peptide. The propeptide occupies Ala19–Lys31. Cys35 and Cys50 are oxidised to a cystine. 3 PbH1 repeats span residues Val140–Gln161, Ala162–Glu192, and Ser193–Ser214. The active-site Proton donor is the Asp207. Cys209 and Cys225 form a disulfide bridge. His229 is a catalytic residue. PbH1 repeat units follow at residues Val244 to Thr265, Val273 to Gln295, and Ser307 to Gly352. Asn246 carries an N-linked (GlcNAc...) asparagine glycan. Intrachain disulfides connect Cys335-Cys340 and Cys359-Cys368.

It belongs to the glycosyl hydrolase 28 family.

It localises to the secreted. It catalyses the reaction (1,4-alpha-D-galacturonosyl)n+m + H2O = (1,4-alpha-D-galacturonosyl)n + (1,4-alpha-D-galacturonosyl)m.. In terms of biological role, involved in maceration and soft-rotting of plant tissue. Hydrolyzes the 1,4-alpha glycosidic bonds of de-esterified pectate in the smooth region of the plant cell wall. The chain is Probable endopolygalacturonase I (pgaI) from Aspergillus niger (strain ATCC MYA-4892 / CBS 513.88 / FGSC A1513).